A 109-amino-acid polypeptide reads, in one-letter code: Iron-sulfur cluster assembly protein CyaY (109 aa).

The protein belongs to the frataxin family.

Its function is as follows. Involved in iron-sulfur (Fe-S) cluster assembly. May act as a regulator of Fe-S biogenesis. In Burkholderia lata (strain ATCC 17760 / DSM 23089 / LMG 22485 / NCIMB 9086 / R18194 / 383), this protein is Iron-sulfur cluster assembly protein CyaY.